A 1677-amino-acid chain; its full sequence is Zinc finger protein 831 (1677 aa).

Over residues 1 to 26 (MEVPEPTCPAPPARDQPAPTPGPPGA) the composition is skewed to pro residues. A disordered region spans residues 1 to 43 (MEVPEPTCPAPPARDQPAPTPGPPGAPGGQASPHLTLGPVLLP). 2 C2H2-type zinc fingers span residues 144 to 166 (YLCP…IRSH) and 172 to 196 (FPCA…TQTH). 10 disordered regions span residues 193–250 (TQTH…SPGA), 270–398 (GSAF…AGLE), 516–557 (WLEP…PSGH), 663–931 (EAAG…VLSA), 950–1062 (TPLP…TCEA), 1100–1119 (NWEL…SGPL), 1137–1176 (LTRP…PFPS), 1216–1243 (LRDE…GPAQ), 1510–1597 (SAES…GQYG), and 1620–1677 (LITR…VIEI). 2 stretches are compositionally biased toward basic and acidic residues: residues 216-232 (EGDK…RGES) and 325-341 (KPWD…KCES). The span at 376-385 (EGGPGPGPGV) shows a compositional bias: gly residues. Residues 391–423 (GAREAGLELEKKRLEERIAQLISHNQAVVDDAQ) are a coiled coil. 4 stretches are compositionally biased toward basic and acidic residues: residues 517 to 526 (LEPREPRDPW), 674 to 684 (QDRRTPVHEDI), 707 to 727 (PTKH…RVEE), and 813 to 834 (SGED…HSWK). Composition is skewed to low complexity over residues 880-894 (LESS…SVAL) and 905-919 (PLHP…HPSL). Residues 1153-1170 (SSHSGTSRSHSTRSPHST) are compositionally biased toward low complexity. The span at 1518–1531 (QTAGRTLTSSSPDS) shows a compositional bias: polar residues. The span at 1649-1662 (RSLEGMRKQTRVEF) shows a compositional bias: basic and acidic residues.

The sequence is that of Zinc finger protein 831 (ZNF831) from Homo sapiens (Human).